The chain runs to 238 residues: Urease subunit alpha (238 aa).

The interval 1-102 is urease gamma; that stretch reads MKLTPKELDK…LVTVHTPIEA (102 aa). A urease beta region spans residues 103–238; it reads NGKLVPGELF…DDNYVKTIKE (136 aa).

The protein in the N-terminal section; belongs to the urease gamma subunit family. It in the C-terminal section; belongs to the urease beta subunit family. In terms of assembly, heterohexamer of 3 UreA (alpha) and 3 UreB (beta) subunits.

The protein resides in the cytoplasm. The catalysed reaction is urea + 2 H2O + H(+) = hydrogencarbonate + 2 NH4(+). It functions in the pathway nitrogen metabolism; urea degradation; CO(2) and NH(3) from urea (urease route): step 1/1. This is Urease subunit alpha from Helicobacter pylori (strain P12).